Here is a 259-residue protein sequence, read N- to C-terminus: Eukaryotic translation initiation factor 4E1 (259 aa).

Residues 1–70 (MQSDFHRMKN…TATTTAPAGD (70 aa)) are disordered. Positions 18-27 (FKTSAPSTEQ) are enriched in polar residues. Over residues 41–51 (EAKDVKPKEDP) the composition is skewed to basic and acidic residues. A compositionally biased stretch (low complexity) spans 54–70 (TGEPAGNTATTTAPAGD). Residues 100-101 (WE), 146-147 (WE), and 199-204 (RGKSNK) contribute to the mRNA site.

This sequence belongs to the eukaryotic initiation factor 4E family. EIF4F is a multi-subunit complex, the composition of which varies with external and internal environmental conditions. It is composed of at least eIF4A, eIF4E1 and eIF4G1. Recruited by cup in oocytes and in early embryos, preventing the interaction with eIF4G. The interaction with cup therefore prevents the translation of key transcripts such as oskar (osk) and nanos (nos) in some regions in the early embryo. Interacts with mxt. Interacts with 4E-T and Thor. Forms a RNP containing at least me31B, eIF4E1, cup, tral and pAbp; this interaction is required for the translational silencing of maternal mRNAs during the maternal-to-zygotic transition. Post-translationally, phosphorylation increases the ability of the protein to bind to mRNA caps and to form the eIF4F complex. In terms of tissue distribution, expressed at the posterior end of developing oocytes (at protein level). Preferential expression in the pole cells, at different developmental stages.

It is found in the cytoplasm. It localises to the cytoplasmic ribonucleoprotein granule. The protein resides in the nucleus. Its subcellular location is the nuclear body. Its function is as follows. Recognizes and binds the 7-methylguanosine (m7G)-containing mRNA cap during an early step in the initiation of protein synthesis and facilitates ribosome binding by inducing the unwinding of the mRNAs secondary structures. In 0-1 hour embryos, forms a complex with me31B, cup, tral and pAbp which binds to various mRNAs including maternal mRNAs, and down-regulates their expression during the maternal-to-zygotic transition. This is Eukaryotic translation initiation factor 4E1 from Drosophila melanogaster (Fruit fly).